Reading from the N-terminus, the 400-residue chain is Dual specificity mitogen-activated protein kinase kinase 2 (400 aa).

Position 1 is an N-acetylmethionine (M1). The residue at position 23 (S23) is a Phosphoserine. Residues 72–369 (FERISELGAG…LKMLMSHTFI (298 aa)) enclose the Protein kinase domain. Residues 78–86 (LGAGNGGVV) and K101 each bind ATP. Catalysis depends on D194, which acts as the Proton acceptor. The residue at position 222 (S222) is a Phosphoserine; by RAF. 4 positions are modified to phosphoserine: S226, S293, S295, and S306. Residues 288–309 (EGEPHSISPRPRPPGRPISGHG) are disordered. Phosphothreonine occurs at positions 394 and 396.

Belongs to the protein kinase superfamily. STE Ser/Thr protein kinase family. MAP kinase kinase subfamily. As to quaternary structure, interacts with MORG1. Interacts with SGK1. Interacts with KSR1. Interacts with KSR1 and BRAF; the interaction with KSR1 mediates KSR1-BRAF dimerization. Interacts with GLS. Mg(2+) serves as cofactor. MAPKK is itself dependent on Ser/Thr phosphorylation for activity catalyzed by MAP kinase kinase kinases (RAF or MEKK1).

Its subcellular location is the cytoplasm. It localises to the membrane. The catalysed reaction is L-seryl-[protein] + ATP = O-phospho-L-seryl-[protein] + ADP + H(+). It catalyses the reaction L-threonyl-[protein] + ATP = O-phospho-L-threonyl-[protein] + ADP + H(+). It carries out the reaction L-tyrosyl-[protein] + ATP = O-phospho-L-tyrosyl-[protein] + ADP + H(+). Catalyzes the concomitant phosphorylation of a threonine and a tyrosine residue in a Thr-Glu-Tyr sequence located in MAP kinases. Activates the ERK1 and ERK2 MAP kinases. Activates BRAF in a KSR1 or KSR2-dependent manner; by binding to KSR1 or KSR2 releases the inhibitory intramolecular interaction between KSR1 or KSR2 protein kinase and N-terminal domains which promotes KSR1 or KSR2-BRAF dimerization and BRAF activation. The sequence is that of Dual specificity mitogen-activated protein kinase kinase 2 (MAP2K2) from Canis lupus familiaris (Dog).